Consider the following 70-residue polypeptide: V-type proton ATPase subunit e1 (70 aa).

2 consecutive transmembrane segments (helical) span residues 1-21 and 36-56; these read MGFLITTLIFVVVGIIASLCV and LTLVITATVCCWMMWAIVYIA.

The protein belongs to the V-ATPase e1/e2 subunit family. As to quaternary structure, V-ATPase is a heteromultimeric enzyme composed of a peripheral catalytic V1 complex (components A to H) attached to an integral membrane V0 proton pore complex (components: a, c, c'', d and e).

The protein localises to the golgi apparatus. It is found in the trans-Golgi network membrane. Subunit of the integral membrane V0 complex of vacuolar ATPase. V-ATPase is responsible for acidifying a variety of intracellular compartments in eukaryotic cells. This is V-type proton ATPase subunit e1 (VHA-e1) from Arabidopsis thaliana (Mouse-ear cress).